Here is a 368-residue protein sequence, read N- to C-terminus: Cobalt-precorrin-5B C(1)-methyltransferase (368 aa).

The protein belongs to the CbiD family.

It catalyses the reaction Co-precorrin-5B + S-adenosyl-L-methionine = Co-precorrin-6A + S-adenosyl-L-homocysteine. The protein operates within cofactor biosynthesis; adenosylcobalamin biosynthesis; cob(II)yrinate a,c-diamide from sirohydrochlorin (anaerobic route): step 6/10. Catalyzes the methylation of C-1 in cobalt-precorrin-5B to form cobalt-precorrin-6A. This Synechococcus sp. (strain CC9605) protein is Cobalt-precorrin-5B C(1)-methyltransferase.